The sequence spans 102 residues: PqqA binding protein (102 aa).

Belongs to the PqqD family. Monomer. Interacts with PqqE.

It participates in cofactor biosynthesis; pyrroloquinoline quinone biosynthesis. Its function is as follows. Functions as a PqqA binding protein and presents PqqA to PqqE, in the pyrroloquinoline quinone (PQQ) biosynthetic pathway. The sequence is that of PqqA binding protein from Rhodopseudomonas palustris (strain ATCC BAA-98 / CGA009).